The chain runs to 461 residues: Piperine synthase (461 aa).

Residues histidine 168 and aspartate 387 each act as proton acceptor in the active site. A Microbody targeting signal motif is present at residues 459–461 (SRM).

This sequence belongs to the plant acyltransferase family. As to quaternary structure, monomer. Confined to immature fruits perisperm. Also detectable in roots.

Its subcellular location is the cytoplasm. The catalysed reaction is piperidine + (E,E)-piperoyl-CoA = piperine + CoA + H(+). The enzyme catalyses pyrrolidine + (E,E)-piperoyl-CoA = piperyline + CoA + H(+). It carries out the reaction (E,E)-piperoyl-CoA + 2-methylpropan-1-amine = (E,E)-piperlonguminine + CoA + H(+). It participates in aromatic compound metabolism. Involved in the biosynthesis of aromatic piperamides natural products such as piperine (1-piperoyl-piperidine), the pungent principle contributing, together with several terpenoids, to the aromatic properties of black pepper fruits, and displaying numerous pharmacological activities such as antiproliferative, antitumor, antiangiogenesis, antioxidant, antidiabetic, antiobesity, cardioprotective, antimicrobial, antiaging, and immunomodulatory effects. Mediates mainly the conversion of piperidine and piperoyl-CoA to piperine. Can also use pyrrolidine and isobutylamine as acceptors and 3,4-methylenedioxycinnamoyl-CoA as an alternative CoA-donor with a lower efficiency. This chain is Piperine synthase, found in Piper nigrum (Black pepper).